Here is a 124-residue protein sequence, read N- to C-terminus: Small ribosomal subunit protein uS12 (124 aa).

Asp89 carries the post-translational modification 3-methylthioaspartic acid. Lys108 is subject to N6-acetyllysine.

This sequence belongs to the universal ribosomal protein uS12 family. In terms of assembly, part of the 30S ribosomal subunit. Contacts proteins S8 and S17. May interact with IF1 in the 30S initiation complex.

Functionally, with S4 and S5 plays an important role in translational accuracy. Interacts with and stabilizes bases of the 16S rRNA that are involved in tRNA selection in the A site and with the mRNA backbone. Located at the interface of the 30S and 50S subunits, it traverses the body of the 30S subunit contacting proteins on the other side and probably holding the rRNA structure together. The combined cluster of proteins S8, S12 and S17 appears to hold together the shoulder and platform of the 30S subunit. This chain is Small ribosomal subunit protein uS12, found in Escherichia coli O139:H28 (strain E24377A / ETEC).